Consider the following 376-residue polypeptide: Hydroxylysine kinase (376 aa).

Catalysis depends on aspartate 229, which acts as the Proton acceptor.

The protein belongs to the aminoglycoside phosphotransferase family.

The protein resides in the cytoplasm. It carries out the reaction (5R)-5-hydroxy-L-lysine + GTP = (5R)-5-phosphooxy-L-lysine + GDP + H(+). Its function is as follows. Catalyzes the GTP-dependent phosphorylation of 5-hydroxy-L-lysine. This Mus musculus (Mouse) protein is Hydroxylysine kinase (Hykk).